We begin with the raw amino-acid sequence, 341 residues long: NADH-quinone oxidoreductase subunit H 2 (341 aa).

8 helical membrane passes run 13 to 33, 82 to 102, 115 to 135, 161 to 181, 190 to 210, 242 to 262, 277 to 297, and 317 to 337; these read IVVIGQSVLLIVVLLISIAYI, GVFLLAPLVTCVLALSAWAVI, VGVLYILAVSSLSVYGIIMAG, IGFVIICVLLCVGSLNLTAIV, VLGWYWLPLFPMFVVFYVSAL, LFVLGEYVAIVTMCAMGTILF, WVPGIVWFALKVLFMFFMFAM, and VFLPLSLAMVVIVAAVLQFAG.

The protein belongs to the complex I subunit 1 family. NDH-1 is composed of 14 different subunits. Subunits NuoA, H, J, K, L, M, N constitute the membrane sector of the complex.

The protein localises to the cell inner membrane. The catalysed reaction is a quinone + NADH + 5 H(+)(in) = a quinol + NAD(+) + 4 H(+)(out). NDH-1 shuttles electrons from NADH, via FMN and iron-sulfur (Fe-S) centers, to quinones in the respiratory chain. The immediate electron acceptor for the enzyme in this species is believed to be ubiquinone. Couples the redox reaction to proton translocation (for every two electrons transferred, four hydrogen ions are translocated across the cytoplasmic membrane), and thus conserves the redox energy in a proton gradient. This subunit may bind ubiquinone. This Rhodopseudomonas palustris (strain HaA2) protein is NADH-quinone oxidoreductase subunit H 2.